The chain runs to 527 residues: Probable bifunctional tRNA threonylcarbamoyladenosine biosynthesis protein (527 aa).

A kae1 region spans residues M1–W324. H107, H111, and Y128 together coordinate Fe cation. Residues Y128–G132, D160, G173, E177, and N257 contribute to the L-threonylcarbamoyladenylate site. D285 provides a ligand contact to Fe cation. Residues V330–V527 enclose the Protein kinase domain. Residues R333 to I341 and K354 contribute to the ATP site. The active-site Proton acceptor; for kinase activity is the D445.

In the N-terminal section; belongs to the KAE1 / TsaD family. The protein in the C-terminal section; belongs to the protein kinase superfamily. Tyr protein kinase family. BUD32 subfamily. In terms of assembly, component of the KEOPS complex that consists of Kae1, Bud32, Cgi121 and Pcc1; the whole complex dimerizes. Requires Fe(2+) as cofactor.

The protein resides in the cytoplasm. It carries out the reaction L-seryl-[protein] + ATP = O-phospho-L-seryl-[protein] + ADP + H(+). The catalysed reaction is L-threonyl-[protein] + ATP = O-phospho-L-threonyl-[protein] + ADP + H(+). The enzyme catalyses L-threonylcarbamoyladenylate + adenosine(37) in tRNA = N(6)-L-threonylcarbamoyladenosine(37) in tRNA + AMP + H(+). Required for the formation of a threonylcarbamoyl group on adenosine at position 37 (t(6)A37) in tRNAs that read codons beginning with adenine. Is a component of the KEOPS complex that is probably involved in the transfer of the threonylcarbamoyl moiety of threonylcarbamoyl-AMP (TC-AMP) to the N6 group of A37. The Kae1 domain likely plays a direct catalytic role in this reaction. The Bud32 domain probably displays kinase activity that regulates Kae1 function. This Thermoplasma volcanium (strain ATCC 51530 / DSM 4299 / JCM 9571 / NBRC 15438 / GSS1) protein is Probable bifunctional tRNA threonylcarbamoyladenosine biosynthesis protein.